A 211-amino-acid polypeptide reads, in one-letter code: Ribosomal RNA small subunit methyltransferase G (211 aa).

S-adenosyl-L-methionine contacts are provided by residues Gly-75, Leu-80, 130–131, and Arg-145; that span reads VE.

This sequence belongs to the methyltransferase superfamily. RNA methyltransferase RsmG family.

It localises to the cytoplasm. It carries out the reaction guanosine(527) in 16S rRNA + S-adenosyl-L-methionine = N(7)-methylguanosine(527) in 16S rRNA + S-adenosyl-L-homocysteine. Its function is as follows. Specifically methylates the N7 position of guanine in position 527 of 16S rRNA. The protein is Ribosomal RNA small subunit methyltransferase G of Aromatoleum aromaticum (strain DSM 19018 / LMG 30748 / EbN1) (Azoarcus sp. (strain EbN1)).